Here is an 832-residue protein sequence, read N- to C-terminus: Beta-galactosidase (832 aa).

The signal sequence occupies residues 1–25; that stretch reads MALKLVLMLMVALLAAVWSPPAVTA. Glu-183 functions as the Proton donor in the catalytic mechanism. Glu-252 serves as the catalytic Nucleophile. One can recognise an SUEL-type lectin domain in the interval 741 to 832; it reads AYGRPKVHLS…KKLAVEAICE (92 aa).

This sequence belongs to the glycosyl hydrolase 35 family.

Its subcellular location is the secreted. It is found in the extracellular space. It localises to the apoplast. It carries out the reaction Hydrolysis of terminal non-reducing beta-D-galactose residues in beta-D-galactosides.. The polypeptide is Beta-galactosidase (Asparagus officinalis (Garden asparagus)).